The primary structure comprises 654 residues: 4-hydroxy-3-methylbut-2-en-1-yl diphosphate synthase (flavodoxin) (654 aa).

Residues Cys-557, Cys-560, Cys-591, and Glu-598 each contribute to the [4Fe-4S] cluster site.

The protein belongs to the IspG family. It depends on [4Fe-4S] cluster as a cofactor.

The catalysed reaction is (2E)-4-hydroxy-3-methylbut-2-enyl diphosphate + oxidized [flavodoxin] + H2O + 2 H(+) = 2-C-methyl-D-erythritol 2,4-cyclic diphosphate + reduced [flavodoxin]. It functions in the pathway isoprenoid biosynthesis; isopentenyl diphosphate biosynthesis via DXP pathway; isopentenyl diphosphate from 1-deoxy-D-xylulose 5-phosphate: step 5/6. Converts 2C-methyl-D-erythritol 2,4-cyclodiphosphate (ME-2,4cPP) into 1-hydroxy-2-methyl-2-(E)-butenyl 4-diphosphate. The protein is 4-hydroxy-3-methylbut-2-en-1-yl diphosphate synthase (flavodoxin) of Protochlamydia amoebophila (strain UWE25).